A 312-amino-acid polypeptide reads, in one-letter code: GDP-L-fucose synthase (312 aa).

11–17 (GGRGMVG) is an NADP(+) binding site. Tyrosine 136 functions as the Proton donor/acceptor in the catalytic mechanism. NADP(+)-binding residues include lysine 140 and histidine 179. 3 residues coordinate substrate: lysine 187, tryptophan 202, and arginine 209.

The protein belongs to the NAD(P)-dependent epimerase/dehydratase family. Fucose synthase subfamily.

The enzyme catalyses GDP-beta-L-fucose + NADP(+) = GDP-4-dehydro-alpha-D-rhamnose + NADPH + H(+). It functions in the pathway nucleotide-sugar biosynthesis; GDP-L-fucose biosynthesis via de novo pathway; GDP-L-fucose from GDP-alpha-D-mannose: step 2/2. In terms of biological role, catalyzes the two-step NADP-dependent conversion of GDP-4-dehydro-6-deoxy-D-mannose to GDP-fucose, involving an epimerase and a reductase reaction. The protein is GDP-L-fucose synthase of Azorhizobium caulinodans (strain ATCC 43989 / DSM 5975 / JCM 20966 / LMG 6465 / NBRC 14845 / NCIMB 13405 / ORS 571).